A 441-amino-acid chain; its full sequence is 4-hydroxy-3-methylbut-2-en-1-yl diphosphate synthase (flavodoxin) (441 aa).

Residues Cys320, Cys323, Cys366, and Glu373 each coordinate [4Fe-4S] cluster.

Belongs to the IspG family. The cofactor is [4Fe-4S] cluster.

The enzyme catalyses (2E)-4-hydroxy-3-methylbut-2-enyl diphosphate + oxidized [flavodoxin] + H2O + 2 H(+) = 2-C-methyl-D-erythritol 2,4-cyclic diphosphate + reduced [flavodoxin]. Its pathway is isoprenoid biosynthesis; isopentenyl diphosphate biosynthesis via DXP pathway; isopentenyl diphosphate from 1-deoxy-D-xylulose 5-phosphate: step 5/6. Functionally, converts 2C-methyl-D-erythritol 2,4-cyclodiphosphate (ME-2,4cPP) into 1-hydroxy-2-methyl-2-(E)-butenyl 4-diphosphate. In Rhodopseudomonas palustris (strain ATCC BAA-98 / CGA009), this protein is 4-hydroxy-3-methylbut-2-en-1-yl diphosphate synthase (flavodoxin).